A 105-amino-acid polypeptide reads, in one-letter code: UPF0251 protein AF_0666 (105 aa).

The protein belongs to the UPF0251 family.

This chain is UPF0251 protein AF_0666, found in Archaeoglobus fulgidus (strain ATCC 49558 / DSM 4304 / JCM 9628 / NBRC 100126 / VC-16).